We begin with the raw amino-acid sequence, 130 residues long: Large ribosomal subunit protein bL17 (130 aa).

The protein belongs to the bacterial ribosomal protein bL17 family. Part of the 50S ribosomal subunit. Contacts protein L32.

The sequence is that of Large ribosomal subunit protein bL17 from Buchnera aphidicola subsp. Acyrthosiphon pisum (strain APS) (Acyrthosiphon pisum symbiotic bacterium).